Consider the following 224-residue polypeptide: Small ribosomal subunit protein uS3 (224 aa).

In terms of domain architecture, KH type-2 spans 38–106; sequence IRKFISKKLK…QVHINIVEIK (69 aa).

Belongs to the universal ribosomal protein uS3 family. In terms of assembly, part of the 30S ribosomal subunit. Forms a tight complex with proteins S10 and S14.

Functionally, binds the lower part of the 30S subunit head. Binds mRNA in the 70S ribosome, positioning it for translation. The protein is Small ribosomal subunit protein uS3 of Lactobacillus helveticus (strain DPC 4571).